The chain runs to 423 residues: Serine hydroxymethyltransferase (423 aa).

(6S)-5,6,7,8-tetrahydrofolate is bound by residues L126 and 130 to 132 (GHL). The residue at position 235 (K235) is an N6-(pyridoxal phosphate)lysine.

The protein belongs to the SHMT family. Homodimer. It depends on pyridoxal 5'-phosphate as a cofactor.

It is found in the cytoplasm. The enzyme catalyses (6R)-5,10-methylene-5,6,7,8-tetrahydrofolate + glycine + H2O = (6S)-5,6,7,8-tetrahydrofolate + L-serine. It participates in one-carbon metabolism; tetrahydrofolate interconversion. It functions in the pathway amino-acid biosynthesis; glycine biosynthesis; glycine from L-serine: step 1/1. Its function is as follows. Catalyzes the reversible interconversion of serine and glycine with tetrahydrofolate (THF) serving as the one-carbon carrier. This reaction serves as the major source of one-carbon groups required for the biosynthesis of purines, thymidylate, methionine, and other important biomolecules. Also exhibits THF-independent aldolase activity toward beta-hydroxyamino acids, producing glycine and aldehydes, via a retro-aldol mechanism. This is Serine hydroxymethyltransferase from Sorangium cellulosum (strain So ce56) (Polyangium cellulosum (strain So ce56)).